A 268-amino-acid polypeptide reads, in one-letter code: Malonyl-[acyl-carrier protein] O-methyltransferase (268 aa).

This sequence belongs to the methyltransferase superfamily.

The catalysed reaction is malonyl-[ACP] + S-adenosyl-L-methionine = malonyl-[ACP] methyl ester + S-adenosyl-L-homocysteine. It functions in the pathway cofactor biosynthesis; biotin biosynthesis. Functionally, converts the free carboxyl group of a malonyl-thioester to its methyl ester by transfer of a methyl group from S-adenosyl-L-methionine (SAM). It allows to synthesize pimeloyl-ACP via the fatty acid synthetic pathway. The chain is Malonyl-[acyl-carrier protein] O-methyltransferase from Prosthecochloris aestuarii (strain DSM 271 / SK 413).